The primary structure comprises 107 residues: Small integral membrane protein 19 (107 aa).

A helical transmembrane segment spans residues 25–43; it reads ATNVYLIVILVSFGLFMYA.

It belongs to the SMIM19 family.

Its subcellular location is the membrane. This is Small integral membrane protein 19 (SMIM19) from Homo sapiens (Human).